The sequence spans 682 residues: TPR repeat-containing thioredoxin TTL4 (682 aa).

Disordered stretches follow at residues M1–L120 and N132–I157. Residue S8 is modified to Phosphoserine. Residues K16–D39 show a composition bias toward basic and acidic residues. S42 bears the Phosphoserine mark. A compositionally biased stretch (low complexity) spans G48–G71. 7 TPR repeats span residues S211 to N244, A246 to Y278, R280 to A312, A402 to N435, V449 to N482, S483 to Y516, and K518 to D550. Positions D587–E674 constitute a Thioredoxin domain.

In terms of tissue distribution, widely expressed.

Its function is as follows. Involved in osmotic and salt stress tolerance. May play a role in the control of meristematic cell size during osmotic stress. In Arabidopsis thaliana (Mouse-ear cress), this protein is TPR repeat-containing thioredoxin TTL4 (TTL4).